The sequence spans 315 residues: MMTALILKRVAQAIPVMLIVAILTFLLMKLLPGDPAILIAGDGASPETVERIRVELGLDQPTVVQLGQWLWNLFHFDLGRSFLLSQPVSQAIAERLPVTISLALLAFAITIPVGIIMGVVAAYLRDSWFDTGVMSLALLGVSVPSFWLAILAVILFSVTLGWFPSAGYVPFLDSPLGWLRSLILPASILALFQIGYLARMTRSEMLEVMDQDYIRTARSKGVSEYSVLSTHAFRNALVSVLTVSGYIFSLLIGGSVVIEQIFALPGLGRLLVQAILARDLPVVQGTMLFLGFLFVAINVLVDILYTIADPRVRYD.

A run of 6 helical transmembrane segments spans residues alanine 13–glycine 33, leucine 102–alanine 122, leucine 136–phenylalanine 156, tryptophan 178–alanine 198, valine 238–isoleucine 258, and methionine 287–isoleucine 307. The region spanning leucine 96–tyrosine 305 is the ABC transmembrane type-1 domain.

The protein belongs to the binding-protein-dependent transport system permease family. In terms of assembly, the complex is composed of two ATP-binding proteins (BMEII0205 and BMEII0206), two transmembrane proteins (BMEII0207/BMEII0208 and BMEII0209) and a solute-binding protein (BMEII0210).

It localises to the cell inner membrane. Its function is as follows. Probably part of an ABC transporter complex that could be involved in peptide import. Probably responsible for the translocation of the substrate across the membrane. This Brucella melitensis biotype 1 (strain ATCC 23456 / CCUG 17765 / NCTC 10094 / 16M) protein is Putative peptide transport system permease protein BMEII0209.